The chain runs to 211 residues: Protein-L-isoaspartate O-methyltransferase 1 (211 aa).

The active site involves Ser-62.

It belongs to the methyltransferase superfamily. L-isoaspartyl/D-aspartyl protein methyltransferase family.

The protein resides in the cytoplasm. It catalyses the reaction [protein]-L-isoaspartate + S-adenosyl-L-methionine = [protein]-L-isoaspartate alpha-methyl ester + S-adenosyl-L-homocysteine. In terms of biological role, catalyzes the methyl esterification of L-isoaspartyl residues in peptides and proteins that result from spontaneous decomposition of normal L-aspartyl and L-asparaginyl residues. It plays a role in the repair and/or degradation of damaged proteins. The chain is Protein-L-isoaspartate O-methyltransferase 1 from Shewanella sediminis (strain HAW-EB3).